The primary structure comprises 449 residues: MVKRNLKGRGDKLSANAPLDNQLEAGKVAKQRDELREKQKRKREDSQTDEFVPDSLSSKILNEARKQLLEEALERQETESATSSVPKRQRGAWLGADASGDKSDDDDDDNEEEDDNGFEDQVVELDPRDEADLARFLKKDAIQMSTLYDIIQAKIEAKQNDAELALSQVDPNEFNMRDMDPEVVEMYEQIGQYMSKYRSGKVPKAFKIIPKMINWEQILFLTKPETWTAAAMYQATRLFASNMNPKMCQRFYTLVLLPRLRDDIDEFKKLNYHLYQALCKAIYKPAAFFKGLILPLLESGTCTLREAVIFSSVLTKVPIPIFHSAAAMLRIAEMEYTGANSVFLRALIDKKYALPYRAVDGVVNHFIRLKTDERDMPVLWHQCLLALCQRYKNDLNAEQKAAIYELIRFHGHYLISPEIRRELESKETEDGHVITSVVVEGRKTDSMEF.

Disordered regions lie at residues 1–58 (MVKR…SLSS) and 71–125 (EALE…VVEL). The segment covering 30-46 (KQRDELREKQKRKREDS) has biased composition (basic and acidic residues). A compositionally biased stretch (acidic residues) spans 103–124 (SDDDDDDNEEEDDNGFEDQVVE).

This sequence belongs to the bystin family.

This is an uncharacterized protein from Caenorhabditis elegans.